Reading from the N-terminus, the 684-residue chain is Glycine--tRNA ligase beta subunit (684 aa).

This sequence belongs to the class-II aminoacyl-tRNA synthetase family. As to quaternary structure, tetramer of two alpha and two beta subunits.

It localises to the cytoplasm. The catalysed reaction is tRNA(Gly) + glycine + ATP = glycyl-tRNA(Gly) + AMP + diphosphate. The protein is Glycine--tRNA ligase beta subunit of Pseudomonas syringae pv. syringae (strain B728a).